Consider the following 266-residue polypeptide: Glucosamine-6-phosphate deaminase (266 aa).

The active-site Proton acceptor; for enolization step is the Asp-72. Catalysis depends on Asp-141, which acts as the For ring-opening step. The active-site Proton acceptor; for ring-opening step is His-143. Glu-148 (for ring-opening step) is an active-site residue.

The protein belongs to the glucosamine/galactosamine-6-phosphate isomerase family. NagB subfamily. In terms of assembly, homohexamer.

It carries out the reaction alpha-D-glucosamine 6-phosphate + H2O = beta-D-fructose 6-phosphate + NH4(+). It functions in the pathway amino-sugar metabolism; N-acetylneuraminate degradation; D-fructose 6-phosphate from N-acetylneuraminate: step 5/5. Its activity is regulated as follows. Allosterically activated by N-acetylglucosamine 6-phosphate (GlcNAc6P). Its function is as follows. Catalyzes the reversible isomerization-deamination of glucosamine 6-phosphate (GlcN6P) to form fructose 6-phosphate (Fru6P) and ammonium ion. In Cronobacter sakazakii (strain ATCC BAA-894) (Enterobacter sakazakii), this protein is Glucosamine-6-phosphate deaminase.